Consider the following 334-residue polypeptide: Putative fatty acid elongase 1 (334 aa).

The Lumenal segment spans residues 1–51 (MDLTGAHMLKIHRPSIDHPFGVDLWHLFEQLSIKTIGWNPSEFEYIPGKTP). A helical transmembrane segment spans residues 52-72 (MSQWSSVIVSITAYYVIILSG). The Cytoplasmic portion of the chain corresponds to 73-86 (RAIMTNRKPLKQRR). A helical membrane pass occupies residues 87–107 (LFQLHNFILTIISGALLALLV). Residues 108-135 (EEVFRNYMRNGLFYCVCDSRHFTQRLVT) are Lumenal-facing. The helical transmembrane segment at 136–156 (LYYLNYLTKYLELMDTVFLFL) threads the bilayer. Residues 157–160 (KKKP) lie on the Cytoplasmic side of the membrane. The chain crosses the membrane as a helical span at residues 161–181 (LAFLHCYHHGITALLCFTQLL). Residues 182–187 (GRTSVQ) lie on the Lumenal side of the membrane. The chain crosses the membrane as a helical span at residues 188-208 (WGVIGLNLYVHVIMYSYYFLA). At 209–224 (ACGRRVWWKQWVTRVQ) the chain is on the cytoplasmic side. A helical transmembrane segment spans residues 225 to 245 (IIQFVLDLILCYFGTYSHIAF). Over 246–260 (RYFPWLPHVGDCSGS) the chain is Lumenal. A helical transmembrane segment spans residues 261-281 (LFAAFFGCGVLSSYLFLFIGF). Residues 282–334 (YINTYIKRGAKKNQRKAAGKADNTSVAAAAGSEALAATTATNASPFSARSRKL) lie on the Cytoplasmic side of the membrane. Ser325 bears the Phosphoserine mark.

Belongs to the ELO family.

The protein localises to the endoplasmic reticulum membrane. It catalyses the reaction a very-long-chain acyl-CoA + malonyl-CoA + H(+) = a very-long-chain 3-oxoacyl-CoA + CO2 + CoA. In terms of biological role, may be involved in the synthesis of very long chain fatty acids. The sequence is that of Putative fatty acid elongase 1 from Schizosaccharomyces pombe (strain 972 / ATCC 24843) (Fission yeast).